The primary structure comprises 331 residues: Ribosomal RNA small subunit methyltransferase H (331 aa).

Residues 49–51 (GGH), Asp-68, Leu-102, Asp-116, and Gln-123 each bind S-adenosyl-L-methionine.

The protein belongs to the methyltransferase superfamily. RsmH family.

It is found in the cytoplasm. It catalyses the reaction cytidine(1402) in 16S rRNA + S-adenosyl-L-methionine = N(4)-methylcytidine(1402) in 16S rRNA + S-adenosyl-L-homocysteine + H(+). Functionally, specifically methylates the N4 position of cytidine in position 1402 (C1402) of 16S rRNA. The chain is Ribosomal RNA small subunit methyltransferase H from Renibacterium salmoninarum (strain ATCC 33209 / DSM 20767 / JCM 11484 / NBRC 15589 / NCIMB 2235).